The sequence spans 725 residues: Envelope glycoprotein H (725 aa).

An N-terminal signal peptide occupies residues 1–19; the sequence is MKLSLILSIALCSTRVVYA. Over 20 to 700 the chain is Virion surface; it reads AGAEAPRISR…LVNVRPSMPY (681 aa). N-linked (GlcNAc...) asparagine; by host glycosylation is found at Asn38 and Asn50. The tract at residues 184–247 is interaction with gL; the sequence is TGYTVTVSLA…QTPDHDLLVV (64 aa). N-linked (GlcNAc...) asparagine; by host glycans are attached at residues Asn319, Asn459, Asn621, and Asn681. A helical transmembrane segment spans residues 701 to 721; the sequence is SVVVALVIIAILMALGLYRLC. At 722-725 the chain is on the intravirion side; the sequence is RQKR.

The protein belongs to the herpesviridae glycoprotein H family. Interacts with glycoprotein L (gL); this interaction is necessary for the correct processing and cell surface expression of gH. The heterodimer gH/gL seems to interact with gB trimers during fusion. N-glycosylated, O-glycosylated, and sialylated.

Its subcellular location is the virion membrane. The protein resides in the host cell membrane. It localises to the host endosome membrane. In terms of biological role, the heterodimer glycoprotein H-glycoprotein L is required for the fusion of viral and plasma membranes leading to virus entry into the host cell. Following initial binding to host receptor, membrane fusion is mediated by the fusion machinery composed of gB and the heterodimer gH/gL. May also be involved in the fusion between the virion envelope and the outer nuclear membrane during virion morphogenesis. The polypeptide is Envelope glycoprotein H (Murid herpesvirus 1 (strain Smith) (MuHV-1)).